The following is an 811-amino-acid chain: Leucine--tRNA ligase (811 aa).

A 'HIGH' region motif is present at residues 38 to 49 (SYPSGSNLHAGH). Positions 570–574 (KMSKS) match the 'KMSKS' region motif. Lysine 573 is an ATP binding site.

Belongs to the class-I aminoacyl-tRNA synthetase family.

Its subcellular location is the cytoplasm. It carries out the reaction tRNA(Leu) + L-leucine + ATP = L-leucyl-tRNA(Leu) + AMP + diphosphate. In Clostridium kluyveri (strain ATCC 8527 / DSM 555 / NBRC 12016 / NCIMB 10680 / K1), this protein is Leucine--tRNA ligase.